We begin with the raw amino-acid sequence, 185 residues long: Thymidine kinase (185 aa).

Residue 17 to 24 participates in ATP binding; that stretch reads GPMFAGKT. Glutamate 92 acts as the Proton acceptor in catalysis. Residue phenylalanine 121 participates in substrate binding. 2 residues coordinate Zn(2+): cysteine 146 and cysteine 149. 166 to 170 is a binding site for substrate; it reads LILAG. Positions 179 and 182 each coordinate Zn(2+).

This sequence belongs to the thymidine kinase family.

It carries out the reaction thymidine + ATP = dTMP + ADP + H(+). Phosphorylates thymidine. ASFV replicates in the cytoplasm of infected cells and contains genes encoding a number of enzymes needed for DNA synthesis, including thymidine kinase. Important for growth in swine macrophages in vitro and is a virus virulence factor in swine. In African swine fever virus (isolate Pig/Kenya/KEN-50/1950) (ASFV), this protein is Thymidine kinase.